A 395-amino-acid chain; its full sequence is Octopamine receptor beta-2R (395 aa).

The Extracellular portion of the chain corresponds to 1–42 (MDPINGSHSGANATISDITNGAYNATDAGEWTSSVMFKLRTC). 3 N-linked (GlcNAc...) asparagine glycosylation sites follow: asparagine 5, asparagine 12, and asparagine 24. The helical transmembrane segment at 43-63 (VLLLIVIMAVLGNMLVIVSVM) threads the bilayer. Residues 64–74 (RHRKLRVITNY) are Cytoplasmic-facing. The helical transmembrane segment at 75–95 (FVVSLAFADILVAMVVMPFNF) threads the bilayer. Topologically, residues 96–117 (SVQFNQGWVFGETICDLWNSSD) are extracellular. Asparagine 114 carries an N-linked (GlcNAc...) asparagine glycan. Residues 118–140 (VYFTSTSILHLCCISVDRYYAIV) form a helical membrane-spanning segment. The Cytoplasmic segment spans residues 141-154 (KPLKYPIKMTKKMA). A helical transmembrane segment spans residues 155–175 (FVMLAATWLSPITISYVPIFM). Residues 176-202 (GWYTTTDFLESRRDDQCEFKVNKPYAV) are Extracellular-facing. The helical transmembrane segment at 203 to 223 (ISSSISFWIPCTIMIFTYLAI) threads the bilayer. Over 224–282 (FKEANRQEKALHARAGNAMLMHRHSREVSDKNGALHINATTPTKDRNLLKMKREHKAAR) the chain is Cytoplasmic. Residues 283–303 (TLGIIMGAFILCWLPFFLYYV) form a helical membrane-spanning segment. At 304 to 315 (STSLCDSCNCPE) the chain is on the extracellular side. The helical transmembrane segment at 316–336 (VVTVIMFWTGYFNSALNPIIY) threads the bilayer. Over 337–395 (AYFNRDFRNAFKNTLACAFCSFCKRSASDLDAMERLDRRGSAQLRVPIPSRRASDLASL) the chain is Cytoplasmic.

The protein belongs to the G-protein coupled receptor 1 family.

The protein resides in the cell membrane. In terms of biological role, autoreceptor for octopamine, which is a neurotransmitter, neurohormone, and neuromodulator in invertebrates. Also acts as a receptor for tyramine, but with much less potency. The activity of this receptor is mediated by G proteins which activate adenylyl cyclase. The protein is Octopamine receptor beta-2R of Chilo suppressalis (Asiatic rice borer moth).